Consider the following 228-residue polypeptide: Ribose-5-phosphate isomerase A (228 aa).

Residues 32 to 35 (TGST), 85 to 88 (DGAD), and 98 to 101 (KGGG) each bind substrate. Catalysis depends on Glu107, which acts as the Proton acceptor. Residue Lys125 participates in substrate binding.

Belongs to the ribose 5-phosphate isomerase family. In terms of assembly, homodimer.

It catalyses the reaction aldehydo-D-ribose 5-phosphate = D-ribulose 5-phosphate. The protein operates within carbohydrate degradation; pentose phosphate pathway; D-ribose 5-phosphate from D-ribulose 5-phosphate (non-oxidative stage): step 1/1. Functionally, catalyzes the reversible conversion of ribose-5-phosphate to ribulose 5-phosphate. The protein is Ribose-5-phosphate isomerase A of Cupriavidus pinatubonensis (strain JMP 134 / LMG 1197) (Cupriavidus necator (strain JMP 134)).